A 228-amino-acid chain; its full sequence is DNA mismatch repair protein MutH (228 aa).

This sequence belongs to the MutH family.

The protein resides in the cytoplasm. Sequence-specific endonuclease that cleaves unmethylated GATC sequences. It is involved in DNA mismatch repair. The chain is DNA mismatch repair protein MutH from Photorhabdus laumondii subsp. laumondii (strain DSM 15139 / CIP 105565 / TT01) (Photorhabdus luminescens subsp. laumondii).